The chain runs to 617 residues: ATP-dependent RNA helicase DBP1 (617 aa).

The interval 1–90 (MADLPQKVSN…TSANYNRGGS (90 aa)) is disordered. Residues 7–17 (KVSNLSINNKE) are compositionally biased toward polar residues. The segment covering 38-58 (PSFERSTPKQEDKVTGGDFFR) has biased composition (basic and acidic residues). Over residues 79–90 (GGTSANYNRGGS) the composition is skewed to polar residues. Positions 154-182 (LDFSSPPLDELLMENIKLASFTKPTPVQK) match the Q motif motif. Residues 185–374 (IPIVTKGRDL…RDFLDNYIFL (190 aa)) form the Helicase ATP-binding domain. An ATP-binding site is contributed by 198-205 (AQTGSGKT). The short motif at 318-321 (DEAD) is the DEAD box element. The Helicase C-terminal domain maps to 385-545 (NITQRILYVD…EVPTFLSDLS (161 aa)). Residues 542 to 617 (SDLSRQNSRG…GYGNSNASWW (76 aa)) form a disordered region. Polar residues predominate over residues 580-594 (FGSTRPRNTGTSNWG).

Belongs to the DEAD box helicase family. DDX3/DED1 subfamily.

It is found in the cytoplasm. It catalyses the reaction ATP + H2O = ADP + phosphate + H(+). In terms of biological role, ATP-binding RNA helicase involved in translation initiation. Remodels RNA in response to ADP and ATP concentrations by facilitating disruption, but also formation of RNA duplexes. Redundant to DED1, may be required in conditions in which DED1 expression is decreased. The chain is ATP-dependent RNA helicase DBP1 (DBP1) from Saccharomyces cerevisiae (strain ATCC 204508 / S288c) (Baker's yeast).